A 129-amino-acid chain; its full sequence is Thylakoid-associated single-stranded DNA-binding protein slr1034 (129 aa).

The SSB domain occupies 1 to 100 (MNSFVLMATV…LTASRISLVD (100 aa)). The interval 99–129 (VDSGNGINPGELSSPPEPEAVDLSNTDDIPF) is disordered.

Homotetramer.

Its subcellular location is the cellular thylakoid membrane. The sequence is that of Thylakoid-associated single-stranded DNA-binding protein slr1034 from Synechocystis sp. (strain ATCC 27184 / PCC 6803 / Kazusa).